Reading from the N-terminus, the 382-residue chain is Queuine tRNA-ribosyltransferase (382 aa).

The Proton acceptor role is filled by Asp96. Substrate contacts are provided by residues 96 to 100, Asp151, Gln194, and Gly221; that span reads DSGGF. The interval 252 to 258 is RNA binding; it reads GVGAPDS. Catalysis depends on Asp271, which acts as the Nucleophile. Residues 276 to 280 form an RNA binding; important for wobble base 34 recognition region; the sequence is TRIAR. The Zn(2+) site is built by Cys309, Cys311, Cys314, and His340.

It belongs to the queuine tRNA-ribosyltransferase family. In terms of assembly, homodimer. Within each dimer, one monomer is responsible for RNA recognition and catalysis, while the other monomer binds to the replacement base PreQ1. Zn(2+) is required as a cofactor.

The catalysed reaction is 7-aminomethyl-7-carbaguanine + guanosine(34) in tRNA = 7-aminomethyl-7-carbaguanosine(34) in tRNA + guanine. Its pathway is tRNA modification; tRNA-queuosine biosynthesis. Catalyzes the base-exchange of a guanine (G) residue with the queuine precursor 7-aminomethyl-7-deazaguanine (PreQ1) at position 34 (anticodon wobble position) in tRNAs with GU(N) anticodons (tRNA-Asp, -Asn, -His and -Tyr). Catalysis occurs through a double-displacement mechanism. The nucleophile active site attacks the C1' of nucleotide 34 to detach the guanine base from the RNA, forming a covalent enzyme-RNA intermediate. The proton acceptor active site deprotonates the incoming PreQ1, allowing a nucleophilic attack on the C1' of the ribose to form the product. After dissociation, two additional enzymatic reactions on the tRNA convert PreQ1 to queuine (Q), resulting in the hypermodified nucleoside queuosine (7-(((4,5-cis-dihydroxy-2-cyclopenten-1-yl)amino)methyl)-7-deazaguanosine). The chain is Queuine tRNA-ribosyltransferase from Lactococcus lactis subsp. lactis (strain IL1403) (Streptococcus lactis).